Here is a 359-residue protein sequence, read N- to C-terminus: Guanine nucleotide-binding protein-like alpha-11 subunit (359 aa).

Residue Gly-2 is the site of N-myristoyl glycine attachment. The G-alpha domain maps to 29-359 (KLIKILMMGN…YVKKILEDTI (331 aa)). A G1 motif region spans residues 32-45 (KILMMGNENSAKST). Ser-44 provides a ligand contact to Mg(2+). The tract at residues 176 to 185 (DIIRCSKNNQ) is G2 motif. GTP-binding positions include 178–185 (IRCSKNNQ), 204–208 (DTGNQ), and 281–284 (NKKE). A G3 motif region spans residues 200-209 (FVFVDTGNQK). A G4 motif region spans residues 277–284 (IVLFNKKE). Positions 337–342 (FNSSDT) are G5 motif.

This sequence belongs to the G-alpha family.

This chain is Guanine nucleotide-binding protein-like alpha-11 subunit (gpaK), found in Dictyostelium discoideum (Social amoeba).